The chain runs to 460 residues: UDP-N-acetylmuramoylalanine--D-glutamate ligase (460 aa).

117–123 (GTNGKTT) is a binding site for ATP.

Belongs to the MurCDEF family.

The protein localises to the cytoplasm. The enzyme catalyses UDP-N-acetyl-alpha-D-muramoyl-L-alanine + D-glutamate + ATP = UDP-N-acetyl-alpha-D-muramoyl-L-alanyl-D-glutamate + ADP + phosphate + H(+). It functions in the pathway cell wall biogenesis; peptidoglycan biosynthesis. Functionally, cell wall formation. Catalyzes the addition of glutamate to the nucleotide precursor UDP-N-acetylmuramoyl-L-alanine (UMA). This is UDP-N-acetylmuramoylalanine--D-glutamate ligase from Prochlorococcus marinus (strain MIT 9313).